We begin with the raw amino-acid sequence, 347 residues long: Histone deacetylase 11 (347 aa).

The interval 14 to 318 is histone deacetylase; that stretch reads KRWPIVYSPR…ARIIADSILN (305 aa). The active site involves His143.

The protein belongs to the histone deacetylase family. Interacts with HDAC6.

The protein localises to the nucleus. The enzyme catalyses N(6)-acetyl-L-lysyl-[histone] + H2O = L-lysyl-[histone] + acetate. Functionally, responsible for the deacetylation of lysine residues on the N-terminal part of the core histones (H2A, H2B, H3 and H4). Histone deacetylation gives a tag for epigenetic repression and plays an important role in transcriptional regulation, cell cycle progression and developmental events. Histone deacetylases act via the formation of large multiprotein complexes. This is Histone deacetylase 11 (Hdac11) from Mus musculus (Mouse).